Consider the following 378-residue polypeptide: Erythronate-4-phosphate dehydrogenase (378 aa).

Positions 45 and 66 each coordinate substrate. 2 residues coordinate NAD(+): D146 and T175. Residue R208 is part of the active site. An NAD(+)-binding site is contributed by D232. E237 is a catalytic residue. The active-site Proton donor is H254. G257 provides a ligand contact to NAD(+). Position 258 (Y258) interacts with substrate.

This sequence belongs to the D-isomer specific 2-hydroxyacid dehydrogenase family. PdxB subfamily. Homodimer.

The protein resides in the cytoplasm. The enzyme catalyses 4-phospho-D-erythronate + NAD(+) = (R)-3-hydroxy-2-oxo-4-phosphooxybutanoate + NADH + H(+). The protein operates within cofactor biosynthesis; pyridoxine 5'-phosphate biosynthesis; pyridoxine 5'-phosphate from D-erythrose 4-phosphate: step 2/5. Its function is as follows. Catalyzes the oxidation of erythronate-4-phosphate to 3-hydroxy-2-oxo-4-phosphonooxybutanoate. This chain is Erythronate-4-phosphate dehydrogenase, found in Escherichia coli O127:H6 (strain E2348/69 / EPEC).